The primary structure comprises 202 residues: Orotate phosphoribosyltransferase (202 aa).

5-phospho-alpha-D-ribose 1-diphosphate contacts are provided by residues Lys93 and 113-121 (EDIITTGGS). Orotate contacts are provided by Thr117 and Arg145.

This sequence belongs to the purine/pyrimidine phosphoribosyltransferase family. PyrE subfamily. As to quaternary structure, homodimer. The cofactor is Mg(2+).

The catalysed reaction is orotidine 5'-phosphate + diphosphate = orotate + 5-phospho-alpha-D-ribose 1-diphosphate. It functions in the pathway pyrimidine metabolism; UMP biosynthesis via de novo pathway; UMP from orotate: step 1/2. Its function is as follows. Catalyzes the transfer of a ribosyl phosphate group from 5-phosphoribose 1-diphosphate to orotate, leading to the formation of orotidine monophosphate (OMP). The chain is Orotate phosphoribosyltransferase from Campylobacter jejuni subsp. jejuni serotype O:2 (strain ATCC 700819 / NCTC 11168).